The sequence spans 626 residues: Dual specificity testis-specific protein kinase 1 (626 aa).

Positions 1-41 are disordered; that stretch reads MAGERPPLRGPGPGPGEVPGEGPPGPGGTGGGPGRGRPSSY. Over residues 8 to 26 the composition is skewed to pro residues; that stretch reads LRGPGPGPGEVPGEGPPGP. The region spanning 57–314 is the Protein kinase domain; sequence FHCAEKIGAG…TEITQHLEWI (258 aa). ATP is bound by residues 63–71 and Lys86; that span reads IGAGFFSEV. The Proton acceptor role is filled by Asp175. Ser220 bears the Phosphoserine; by autocatalysis mark. Disordered stretches follow at residues 331 to 373, 423 to 488, and 529 to 564; these read HNQG…NWGD, ETLV…QLPL, and WAGE…EPDE. Position 338 is an omega-N-methylarginine (Arg338). The span at 348–357 shows a compositional bias: basic and acidic residues; that stretch reads PDPRLSRSRS. Residues 419–524 are required for interaction with YWHAB; it reads VTTPETLVQP…NNNPPAVVVN (106 aa). The segment covering 476–485 has biased composition (pro residues); the sequence is EPEPPGPAPQ. The required for interaction with PARVA stretch occupies residues 527–624; that stretch reads QGWAGEPWNR…PTPSLQLPGA (98 aa). A required for interaction with SPRED1 and SPRY2. Required for TESK1-mediated dephosphorylation of SPRY2 and SPRY2 inhibition of ERK phosphorylation region spans residues 527–626; that stretch reads QGWAGEPWNR…PSLQLPGARS (100 aa).

Belongs to the protein kinase superfamily. TKL Ser/Thr protein kinase family. In terms of assembly, interacts (via both C- and N-termini) with SPRY4 (via C-terminus); the interaction inhibits TESK1 kinase activity. Interacts with TAOK1; the interaction inhibits TAOK1 kinase activity. Interacts (via C-terminus) with SPRED1 (via C-terminus); the interaction inhibits TESK1 kinase activity. Interacts (via C-terminus) with PARVA/PARVIN (via C-terminus); the interaction inhibits TESK1 kinase activity. Interacts with YWHAB/14-3-3 beta; the interaction is dependent on the phosphorylation of TESK1 Ser-437 and inhibits TESK1 kinase activity. Interacts with SPRY1, SPRY3 and SPRED2. Interacts (via C-terminus) with SPRY2 (via C-terminus); the interaction disrupts SPRY2 interaction with PPP2CA/PP2A-C, possibly by vesicular sequestration of SPRY2. Therefore dephosphorylation of SPRY2 by the serine/threonine-protein phosphatase 2A (PP2A) holoenzyme is lost, inhibiting its interaction with GRB2. It depends on Mg(2+) as a cofactor. Mn(2+) is required as a cofactor. Autophosphorylated on serine and tyrosine residues. Expressed in podocytes and renal tubular cells in the kidney (at protein level).

It is found in the cytoplasm. It localises to the perinuclear region. The protein resides in the cytoskeleton. Its subcellular location is the microtubule organizing center. The protein localises to the centrosome. It is found in the cell projection. It localises to the lamellipodium. The enzyme catalyses L-seryl-[protein] + ATP = O-phospho-L-seryl-[protein] + ADP + H(+). The catalysed reaction is L-threonyl-[protein] + ATP = O-phospho-L-threonyl-[protein] + ADP + H(+). It catalyses the reaction L-tyrosyl-[protein] + ATP = O-phospho-L-tyrosyl-[protein] + ADP + H(+). With respect to regulation, activated by autophosphorylation on Ser-220. Kinase activity is inhibited by SPRED1. Its function is as follows. Dual specificity protein kinase activity catalyzing autophosphorylation and phosphorylation of exogenous substrates on both serine/threonine and tyrosine residues. Regulates the cellular cytoskeleton by enhancing actin stress fiber formation via phosphorylation of cofilin and by preventing microtubule breakdown via inhibition of TAOK1/MARKK kinase activity. Inhibits podocyte motility via regulation of actin cytoskeletal dynamics and phosphorylation of CFL1. Positively regulates integrin-mediated cell spreading, via phosphorylation of cofilin. Suppresses ciliogenesis via multiple pathways; phosphorylation of CFL1, suppression of ciliary vesicle directional trafficking to the ciliary base, and by facilitating YAP1 nuclear localization where it acts as a transcriptional corepressor of the TEAD4 target genes AURKA and PLK1. Probably plays a central role at and after the meiotic phase of spermatogenesis. The sequence is that of Dual specificity testis-specific protein kinase 1 (TESK1) from Homo sapiens (Human).